The primary structure comprises 152 residues: uncharacterized protein (152 aa).

A helical membrane pass occupies residues 12-34 (ALLYLGGGLLAMIYGLITFFMAF).

To B.subtilis YfjD.

It localises to the membrane. This is an uncharacterized protein from Bacillus subtilis (strain 168).